The chain runs to 431 residues: Urokinase-type plasminogen activator (431 aa).

The N-terminal stretch at 1–20 is a signal peptide; that stretch reads MRALLARLLLCVLVVSDSKG. The EGF-like domain occupies 27 to 63; sequence VPSNCDCLNGGTCVSNKYFSNIHWCNCPKKFGGQHCE. 6 disulfide bridges follow: Cys31/Cys39, Cys33/Cys51, Cys53/Cys62, Cys70/Cys151, Cys91/Cys133, and Cys122/Cys146. A binds urokinase plasminogen activator surface receptor region spans residues 34 to 57; that stretch reads LNGGTCVSNKYFSNIHWCNCPKKF. O-linked (Fuc) threonine glycosylation occurs at Thr38. The Kringle domain occupies 70-151; the sequence is CYEGNGHFYR…LVQECMVHDC (82 aa). Residues 152 to 177 are connecting peptide; sequence ADGKKPSSPPEELKFQCGQKTLRPRF. Ser158 is subject to Phosphoserine. Cystine bridges form between Cys168–Cys299, Cys209–Cys225, Cys217–Cys288, Cys313–Cys382, Cys345–Cys361, and Cys372–Cys400. The region spanning 179–424 is the Peptidase S1 domain; that stretch reads IIGGEFTTIE…FLPWIRSHTK (246 aa). Residues His224 and Asp275 each act as charge relay system in the active site. Residue Asn322 is glycosylated (N-linked (GlcNAc...) asparagine). Ser323 carries the phosphoserine modification. Ser376 (charge relay system) is an active-site residue.

Belongs to the peptidase S1 family. In terms of assembly, found in high and low molecular mass forms. Each consists of two chains, A and B. The high molecular mass form contains a long chain A which is cleaved to yield a short chain A. Forms heterodimer with SERPINA5. Binds LRP1B; binding is followed by internalization and degradation. Interacts with MRC2. Interacts with PLAUR. In complex with SERPINE1, interacts with PLAUR/uPAR. Interacts with SORL1 and LRP1, either alone or in complex with SERPINE1; these interactions are abolished in the presence of LRPAP1/RAP. The ternary complex composed of PLAUR-PLAU-PAI1 also interacts with SORLA. In terms of processing, phosphorylation of Ser-158 and Ser-323 abolishes proadhesive ability but does not interfere with receptor binding. Produced as an inactive single-chain protein (pro-uPA or sc-uPA), is processed into the active disulfide-linked two-chain form of PLAU/uPA by a proteolytic event mediated, at least, by TMPRSS4. In terms of tissue distribution, expressed in the prostate gland and prostate cancers.

It is found in the secreted. The enzyme catalyses Specific cleavage of Arg-|-Val bond in plasminogen to form plasmin.. With respect to regulation, inhibited by SERPINA5. Inhibited by SERPINE1. Specifically cleaves the zymogen plasminogen to form the active enzyme plasmin. The chain is Urokinase-type plasminogen activator from Homo sapiens (Human).